The chain runs to 669 residues: MATSEETAAGYVIGVYFHSVHVHCRIIVWQVNFLPLDPNDGETECYFVVDTLTKEAMERMPEIQECVPSITEHARDLAIWELALRLQNQTIVKAVRTASLPVVLIMTVGRIVNDVIPCPNVRTPRPLACAYLHCEATVTFEVPLTGPAASTGTWHSSIYRECAISAIEICLKTSRGIYSCQSNEAPEAKREKRGLDISDVFVCLTYDIPIAGRVLSLLVPHAPAFHVLWINEDSKWNGAAVEFFRALHHKLFSERNGIPPLWLYVFPGAVEEGTAFAPLLPAFPCIPLRYGSPTSLDRASVQWDLFEPHILTHFDGIKRTSLADTVFGYDSLAISRECEDQYVWPTPVTDININLCTDSDTMAIVREPSGLVAVNLEALLRTDSVLSRVSSIVSLDTLLDLSTPECRRSVELRYNSLLSTVLSWSTSRGHKWAAIVKWKLFFLVQALEPEQWSPEFKDLKRACQMAGFTLKGGTSGDLVFSSHANLLFSTSMGYFLHAGSPRSTAGTGGEPNPRHITGPDTEGNGEHRNSPNLCGFVTWLQSLTTCIERALNMPPDTSWLQLIEEVIPLYFHRRRQTSFWLIPLSHCEGIPVCPPLPFDCLAPRLFIVTKSGPMCYRAGFSLPVDVNYLFYLEQTLKAVRQVSPQEHNPQDAKEMTLQLEAWTRLLSLF.

The disordered stretch occupies residues 502-526 (RSTAGTGGEPNPRHITGPDTEGNGE).

Belongs to the herpesviridae HEPA family. In terms of assembly, associates with the primase and the helicase to form the helicase-primase complex. Interacts with the origin-binding protein. Interacts with the polymerase catalytic subunit.

The protein localises to the host nucleus. Component of the helicase/primase complex. Unwinds the DNA at the replication forks and generates single-stranded DNA for both leading and lagging strand synthesis. The primase synthesizes short RNA primers on the lagging strand that the polymerase presumably elongates using dNTPs. The primase-associated factor has no known catalytic activity in the complex and may serve to facilitate the formation of the replisome by directly interacting with the origin-binding protein and the polymerase. The protein is DNA helicase/primase complex-associated protein (ORF40) of Human herpesvirus 8 type P (isolate GK18) (HHV-8).